The chain runs to 131 residues: Small ribosomal subunit protein uS8 (131 aa).

This sequence belongs to the universal ribosomal protein uS8 family. In terms of assembly, part of the 30S ribosomal subunit. Contacts proteins S5 and S12.

In terms of biological role, one of the primary rRNA binding proteins, it binds directly to 16S rRNA central domain where it helps coordinate assembly of the platform of the 30S subunit. This is Small ribosomal subunit protein uS8 from Novosphingobium aromaticivorans (strain ATCC 700278 / DSM 12444 / CCUG 56034 / CIP 105152 / NBRC 16084 / F199).